The sequence spans 1516 residues: Myosin-14 (1516 aa).

Residues 7–56 enclose the Myosin N-terminal SH3-like domain; sequence NVGSCVWVEDPEVAWIDGEVIEVKGSDIKVKCTSGKTVAIKVSSAYPKDV. Residues 61–738 form the Myosin motor domain; it reads SGVDDMTRLA…QMADLDARRN (678 aa). ATP-binding positions include 155–162 and 208–216; these read GESGAGKT and NNNSSRFGK. Actin-binding regions lie at residues 494-528, 530-553, 588-612, and 612-634; these read LIEK…YQTF, DHKH…AGDV, FPLL…KQQL, and LVTL…KPNN. IQ domains are found at residues 741 to 770, 764 to 793, 789 to 818, 812 to 841, 837 to 866, and 860 to 889; these read LGRA…VATN, LRKV…DAAV, RDAA…AAVS, LYFA…DKAA, QDKA…AAIT, and LKKA…AAKE. Residues 890 to 1056 are a coiled coil; that stretch reads TGVLEAAKSK…ENKILRQKSL (167 aa). Residues 1061 to 1085 are disordered; that stretch reads GHLPPTPVKGSQNGHFSSKESPFNG. The segment covering 1069–1084 has biased composition (polar residues); the sequence is KGSQNGHFSSKESPFN. The region spanning 1158–1463 is the Dilute domain; the sequence is DRLVQMIGSA…IANMRVLMTE (306 aa).

It belongs to the TRAFAC class myosin-kinesin ATPase superfamily. Myosin family. Plant myosin class XI subfamily. As to quaternary structure, homodimer.

Myosin heavy chain that is required for the cell cycle-regulated transport of various organelles and proteins for their segregation. Functions by binding with its tail domain to receptor proteins on organelles and exerting force with its N-terminal motor domain against actin filaments, thereby transporting its cargo along polarized actin cables. The sequence is that of Myosin-14 (XI-H) from Arabidopsis thaliana (Mouse-ear cress).